A 544-amino-acid polypeptide reads, in one-letter code: O-phosphoserine--tRNA(Cys) ligase (544 aa).

Substrate contacts are provided by residues 194–196, 239–241, 281–282, and asparagine 335; these read HMT, SAS, and YY.

Belongs to the class-II aminoacyl-tRNA synthetase family. O-phosphoseryl-tRNA(Cys) synthetase subfamily. Homotetramer. Interacts with SepCysS.

The enzyme catalyses tRNA(Cys) + O-phospho-L-serine + ATP = O-phospho-L-seryl-tRNA(Cys) + AMP + diphosphate. Its function is as follows. Catalyzes the attachment of O-phosphoserine (Sep) to tRNA(Cys). This Methanopyrus kandleri (strain AV19 / DSM 6324 / JCM 9639 / NBRC 100938) protein is O-phosphoserine--tRNA(Cys) ligase.